The sequence spans 395 residues: Tryptophan synthase beta chain (395 aa).

K86 carries the post-translational modification N6-(pyridoxal phosphate)lysine.

It belongs to the TrpB family. Tetramer of two alpha and two beta chains. Pyridoxal 5'-phosphate serves as cofactor.

It catalyses the reaction (1S,2R)-1-C-(indol-3-yl)glycerol 3-phosphate + L-serine = D-glyceraldehyde 3-phosphate + L-tryptophan + H2O. The protein operates within amino-acid biosynthesis; L-tryptophan biosynthesis; L-tryptophan from chorismate: step 5/5. In terms of biological role, the beta subunit is responsible for the synthesis of L-tryptophan from indole and L-serine. This chain is Tryptophan synthase beta chain, found in Pseudoalteromonas atlantica (strain T6c / ATCC BAA-1087).